A 754-amino-acid polypeptide reads, in one-letter code: Bifunctional sesterterpene synthase astC (754 aa).

The first 24 residues, 1–24 (MASLEVFVLYLRIFFISFMSRARS), serve as a signal peptide directing secretion. The interval 58–388 (IQYRHSKLVD…RYHFHKPEHW (331 aa)) is sesterterpene synthase. Mg(2+) contacts are provided by aspartate 149 and aspartate 153. A geranylfarnesyl diphosphate synthase region spans residues 389–753 (RQVENVDDDG…LRLLLKRLHV (365 aa)). Basic and acidic residues predominate over residues 392–403 (ENVDDDGNKSDD). Residues 392–414 (ENVDDDGNKSDDSGIAMKDSPES) are disordered. Mg(2+) contacts are provided by aspartate 512 and aspartate 516.

The protein in the N-terminal section; belongs to the terpene synthase family. This sequence in the C-terminal section; belongs to the FPP/GGPP synthase family. Requires Mg(2+) as cofactor.

It carries out the reaction (2E,6E,10E,14E)-geranylfarnesyl diphosphate = preasperterpenoid A + diphosphate. The protein operates within secondary metabolite biosynthesis; terpenoid biosynthesis. In terms of biological role, bifunctional sesterterpene synthase; part of the gene cluster that mediates the biosynthesis of the asperterpenoids, sesterterpenes that exhibit anti-tuberculosis activity. The first step of the pathway is performed by the sesterterpene synthase astC that possesses both prenyl transferase and terpene cyclase activity, converting isopentenyl diphosphate and dimethylallyl diphosphate into geranylfarnesyl diphosphate (GFPP) and further converting GFPP into preasperterpenoid A, respectively. The cytochrome P450 monooxygenase astB then dually oxidizes preasperterpenoid A to produce asperterpenoid A along with a minor product, asperterpenoid B. Finally, the cytochrome P450 monooxygenase astA converts asperterpenoid A into asperterpenoid C. The protein is Bifunctional sesterterpene synthase astC of Talaromyces wortmannii (Penicillium wortmannii).